A 488-amino-acid polypeptide reads, in one-letter code: Argininosuccinate lyase 2 (488 aa).

The protein belongs to the lyase 1 family. Argininosuccinate lyase subfamily.

The protein localises to the cytoplasm. It carries out the reaction 2-(N(omega)-L-arginino)succinate = fumarate + L-arginine. It functions in the pathway amino-acid biosynthesis; L-arginine biosynthesis; L-arginine from L-ornithine and carbamoyl phosphate: step 3/3. The protein is Argininosuccinate lyase 2 of Rhizobium meliloti (strain 1021) (Ensifer meliloti).